Reading from the N-terminus, the 278-residue chain is Urease accessory protein UreD (278 aa).

The protein belongs to the UreD family. As to quaternary structure, ureD, UreF and UreG form a complex that acts as a GTP-hydrolysis-dependent molecular chaperone, activating the urease apoprotein by helping to assemble the nickel containing metallocenter of UreC. The UreE protein probably delivers the nickel.

It is found in the cytoplasm. Functionally, required for maturation of urease via the functional incorporation of the urease nickel metallocenter. This Blochmanniella pennsylvanica (strain BPEN) protein is Urease accessory protein UreD.